We begin with the raw amino-acid sequence, 188 residues long: Ribosome-recycling factor (188 aa).

It belongs to the RRF family.

It is found in the cytoplasm. Functionally, responsible for the release of ribosomes from messenger RNA at the termination of protein biosynthesis. May increase the efficiency of translation by recycling ribosomes from one round of translation to another. The polypeptide is Ribosome-recycling factor (Blochmanniella floridana).